A 253-amino-acid polypeptide reads, in one-letter code: Triosephosphate isomerase (253 aa).

15-17 (NWK) is a binding site for substrate. Residue histidine 101 is the Electrophile of the active site. Glutamate 171 serves as the catalytic Proton acceptor. Substrate is bound by residues glycine 177, serine 216, and 237-238 (GG).

This sequence belongs to the triosephosphate isomerase family. Homodimer.

Its subcellular location is the cytoplasm. The enzyme catalyses D-glyceraldehyde 3-phosphate = dihydroxyacetone phosphate. It participates in carbohydrate biosynthesis; gluconeogenesis. It functions in the pathway carbohydrate degradation; glycolysis; D-glyceraldehyde 3-phosphate from glycerone phosphate: step 1/1. In terms of biological role, involved in the gluconeogenesis. Catalyzes stereospecifically the conversion of dihydroxyacetone phosphate (DHAP) to D-glyceraldehyde-3-phosphate (G3P). The sequence is that of Triosephosphate isomerase from Caulobacter vibrioides (strain ATCC 19089 / CIP 103742 / CB 15) (Caulobacter crescentus).